Reading from the N-terminus, the 143-residue chain is Small ribosomal subunit protein bS6 (143 aa).

The disordered stretch occupies residues S100–N143. Composition is skewed to basic and acidic residues over residues K104–V113 and D122–N143.

Belongs to the bacterial ribosomal protein bS6 family.

Its function is as follows. Binds together with bS18 to 16S ribosomal RNA. This chain is Small ribosomal subunit protein bS6, found in Hamiltonella defensa subsp. Acyrthosiphon pisum (strain 5AT).